Consider the following 348-residue polypeptide: Rhodopsin (348 aa).

Met-1 is modified (N-acetylmethionine). Over 1–36 (MNGTEGLNFYVPFSNKTGVVRSPFEYPQYYLAEPWQ) the chain is Extracellular. 2 N-linked (GlcNAc...) asparagine glycosylation sites follow: Asn-2 and Asn-15. Residues 37–61 (FSVLAAYMFLLIVLGFPINFLTLYV) traverse the membrane as a helical segment. Topologically, residues 62–73 (TVQHKKLRTPLN) are cytoplasmic. Residues 74 to 99 (YILLNLAVANLFMVFGGFTTTLYTSL) traverse the membrane as a helical segment. The Extracellular portion of the chain corresponds to 100-111 (HAYFVFGPTGCN). Cysteines 110 and 187 form a disulfide. The helical transmembrane segment at 112 to 133 (LEGFFATLGGEIALWSLVVLAI) threads the bilayer. A 'Ionic lock' involved in activated form stabilization motif is present at residues 134–136 (ERY). Over 134–152 (ERYVVVCKPMSNFRFGENH) the chain is Cytoplasmic. The helical transmembrane segment at 153-173 (AIMGLALTWIMAMACAAAPLV) threads the bilayer. Topologically, residues 174 to 202 (GWSRYIPEGMQCSCGIDYYTSRQEVNNES) are extracellular. Residue Glu-201 participates in Zn(2+) binding. The helical transmembrane segment at 203 to 227 (FVIYMFVVHFTIPLVIIFFCYGQLV) threads the bilayer. Residues 228–252 (FTVKEAAAQQQESATTQKAEKEVTR) are Cytoplasmic-facing. Residues 253 to 274 (MVIIMVVAFLICWVPYASVAFY) form a helical membrane-spanning segment. Over 275 to 286 (IFTHQGSDFGPI) the chain is Extracellular. Gln-279 provides a ligand contact to Zn(2+). Residues 287–306 (FMTIPSFFAKSSSIYNPVIY) traverse the membrane as a helical segment. Lys-296 bears the N6-(retinylidene)lysine mark. The Cytoplasmic segment spans residues 307–348 (IMMNKQFRNCMLTTLCCGRNPLGDDEASTTASKTETSQVAPA). 2 S-palmitoyl cysteine lipidation sites follow: Cys-322 and Cys-323. Ser-334 carries the post-translational modification Phosphoserine. Phosphothreonine is present on residues Thr-335 and Thr-336. Phosphoserine is present on Ser-338. Residues Thr-340 and Thr-342 each carry the phosphothreonine modification. Ser-343 is subject to Phosphoserine.

The protein belongs to the G-protein coupled receptor 1 family. Opsin subfamily. In terms of assembly, homodimer. May form a complex composed of RHO, GRK1 and RCVRN in a Ca(2+)-dependent manner; RCVRN prevents the interaction between GRK1 and RHO. Interacts with GRK1. Interacts (phosphorylated form) with SAG. Interacts with GNAT1. Interacts with GNAT3. SAG and G-proteins compete for a common binding site. Interacts with PRCD; the interaction promotes PRCD stability. Forms a complex with ASAP1 and ARF4. Forms a complex with ASAP1, RAB11A, Rabin8/RAB3IP, ARF4 and RAB11FIP3; the complex regulates Golgi-to-cilia rhodopsin/RHO transport in photoreceptors. Contains one covalently linked retinal chromophore. Upon light absorption, the covalently bound 11-cis-retinal is converted to all-trans-retinal. After hydrolysis of the Schiff base and release of the covalently bound all-trans-retinal, active rhodopsin is regenerated by binding of a fresh molecule of 11-cis-retinal.

Its subcellular location is the membrane. It is found in the cell projection. The protein localises to the cilium. The protein resides in the photoreceptor outer segment. Functionally, photoreceptor required for image-forming vision at low light intensity. Light-induced isomerization of 11-cis to all-trans retinal triggers a conformational change that activates signaling via G-proteins. Signaling mediates the activation of phospholipase C. Subsequent receptor phosphorylation mediates displacement of the bound G-protein alpha subunit by arrestin and terminates signaling. This Tursiops truncatus (Atlantic bottle-nosed dolphin) protein is Rhodopsin (RHO).